Here is a 237-residue protein sequence, read N- to C-terminus: Urease accessory protein UreF (237 aa).

It belongs to the UreF family. In terms of assembly, ureD, UreF and UreG form a complex that acts as a GTP-hydrolysis-dependent molecular chaperone, activating the urease apoprotein by helping to assemble the nickel containing metallocenter of UreC. The UreE protein probably delivers the nickel.

It is found in the cytoplasm. Its function is as follows. Required for maturation of urease via the functional incorporation of the urease nickel metallocenter. The protein is Urease accessory protein UreF of Methylibium petroleiphilum (strain ATCC BAA-1232 / LMG 22953 / PM1).